A 702-amino-acid polypeptide reads, in one-letter code: 1,4-alpha-glucan-branching enzyme (702 aa).

Ala-2 is subject to N-acetylalanine. Residues 62–63 (NE) and 91–93 (WAP) each bind substrate. Trp-107 contacts (1,4-alpha-D-glucosyl)n. A substrate-binding site is contributed by 118-121 (DYGK). Residue Lys-143 coordinates (1,4-alpha-D-glucosyl)n. Tyr-173 is subject to Phosphotyrosine. 333-336 (EILR) is a binding site for substrate. Asp-357 serves as the catalytic Nucleophile. Glu-412 (proton donor) is an active-site residue.

Belongs to the glycosyl hydrolase 13 family. GlgB subfamily. Monomer.

It catalyses the reaction Transfers a segment of a (1-&gt;4)-alpha-D-glucan chain to a primary hydroxy group in a similar glucan chain.. The protein operates within glycan biosynthesis; glycogen biosynthesis. Its function is as follows. Glycogen-branching enzyme participates in the glycogen biosynthetic process along with glycogenin and glycogen synthase. Generates alpha-1,6-glucosidic branches from alpha-1,4-linked glucose chains, to increase solubility of the glycogen polymer. The sequence is that of 1,4-alpha-glucan-branching enzyme (GBE1) from Homo sapiens (Human).